The primary structure comprises 150 residues: Ribonuclease H (150 aa).

The RNase H type-1 domain maps to 1-141 (MKSIEVHTDG…VDVLARNQAI (141 aa)). Mg(2+)-binding residues include aspartate 9, glutamate 47, aspartate 69, and aspartate 133.

Belongs to the RNase H family. As to quaternary structure, monomer. It depends on Mg(2+) as a cofactor.

It localises to the cytoplasm. It catalyses the reaction Endonucleolytic cleavage to 5'-phosphomonoester.. Its function is as follows. Endonuclease that specifically degrades the RNA of RNA-DNA hybrids. The chain is Ribonuclease H from Xanthomonas campestris pv. campestris (strain 8004).